A 1015-amino-acid chain; its full sequence is GTPase-activating Rap/Ran-GAP domain-like protein 3 (1015 aa).

Positions 200 to 416 (LLVLEEQEGS…RTLDMLIRSL (217 aa)) constitute a Rap-GAP domain. The 315-residue stretch at 498 to 812 (PYDIVCGDSW…QLTASRSDIY (315 aa)) folds into the CNH domain. Disordered regions lie at residues 821–842 (SASN…PTGY) and 924–1004 (ELLG…FTFS). A compositionally biased stretch (low complexity) spans 823-835 (SNCSSRDTSSQSS). Residues 949–959 (KNKEEEQKRTA) show a composition bias toward basic and acidic residues.

Belongs to the GARNL3 family.

The chain is GTPase-activating Rap/Ran-GAP domain-like protein 3 (garnl3) from Danio rerio (Zebrafish).